We begin with the raw amino-acid sequence, 64 residues long: Prokaryotic ubiquitin-like protein Pup (64 aa).

The disordered stretch occupies residues 1 to 38 (MAQEQTKRGGGGGEDDDPTGSTAAGQERREKLTEETDD). An ARC ATPase binding region spans residues 21–58 (STAAGQERREKLTEETDDLLDEIDDVLEENAEDFVRAY). A coiled-coil region spans residues 23 to 52 (AAGQERREKLTEETDDLLDEIDDVLEENAE). Glutamine 64 is subject to Deamidated glutamine. An Isoglutamyl lysine isopeptide (Gln-Lys) (interchain with K-? in acceptor proteins) cross-link involves residue glutamine 64.

The protein belongs to the prokaryotic ubiquitin-like protein family. As to quaternary structure, strongly interacts with the proteasome-associated ATPase ARC through a hydrophobic interface; the interacting region of Pup lies in its C-terminal half. There is one Pup binding site per ARC hexamer ring. In terms of processing, is modified by deamidation of its C-terminal glutamine to glutamate by the deamidase Dop, a prerequisite to the subsequent pupylation process.

It functions in the pathway protein degradation; proteasomal Pup-dependent pathway. Its function is as follows. Protein modifier that is covalently attached to lysine residues of substrate proteins, thereby targeting them for proteasomal degradation. The tagging system is termed pupylation. This Mycolicibacterium gilvum (strain PYR-GCK) (Mycobacterium gilvum (strain PYR-GCK)) protein is Prokaryotic ubiquitin-like protein Pup.